Here is a 363-residue protein sequence, read N- to C-terminus: DNA polymerase IV (363 aa).

The 184-residue stretch at 14 to 197 folds into the UmuC domain; sequence IIHIDMDAFF…LPVEKFHGVG (184 aa). Residues aspartate 18 and aspartate 115 each coordinate Mg(2+). Glutamate 116 is an active-site residue.

This sequence belongs to the DNA polymerase type-Y family. As to quaternary structure, monomer. It depends on Mg(2+) as a cofactor.

It is found in the cytoplasm. The enzyme catalyses DNA(n) + a 2'-deoxyribonucleoside 5'-triphosphate = DNA(n+1) + diphosphate. Its function is as follows. Poorly processive, error-prone DNA polymerase involved in untargeted mutagenesis. Copies undamaged DNA at stalled replication forks, which arise in vivo from mismatched or misaligned primer ends. These misaligned primers can be extended by PolIV. Exhibits no 3'-5' exonuclease (proofreading) activity. May be involved in translesional synthesis, in conjunction with the beta clamp from PolIII. This Lactococcus lactis subsp. lactis (strain IL1403) (Streptococcus lactis) protein is DNA polymerase IV.